A 281-amino-acid chain; its full sequence is MSSSSWLGCLLAVLLSALALSQGLPLLEDLDENSFPDGRIVGGYVTDIAQVPYQITLRYKAISSPENPFRHRCGGSIVNETTILTAAHCVIGTVASQFKVVAGTNFQTGTDGVITNVKRVIMHEGYNSGAAYNNDIAVLFVDPPLPLNNFTIKAIKLATEPPLDGAPSKISGWGSTYPGGYSSNQLLAVDVPIVGNDLCDLDYENFIDETYHITSAMLCAGKRGVGGADACQGDSGGPLVVRDELHGVVSWGNSCALPNYPGVYANVAFLRPWIDAVRAGL.

The signal sequence occupies residues 1-23; sequence MSSSSWLGCLLAVLLSALALSQG. Residues 24 to 39 constitute a propeptide, activation peptide; the sequence is LPLLEDLDENSFPDGR. In terms of domain architecture, Peptidase S1 spans 40 to 279; that stretch reads IVGGYVTDIA…LRPWIDAVRA (240 aa). A disulfide bridge links cysteine 73 with cysteine 89. Catalysis depends on charge relay system residues histidine 88 and aspartate 135. 2 disulfides stabilise this stretch: cysteine 199–cysteine 219 and cysteine 231–cysteine 255. Serine 235 functions as the Charge relay system in the catalytic mechanism.

This sequence belongs to the peptidase S1 family.

It is found in the secreted. The protein localises to the extracellular space. It catalyses the reaction Preferential cleavage: Arg-|-Xaa, Lys-|-Xaa.. The polypeptide is Trypsin zeta (zetaTry) (Drosophila erecta (Fruit fly)).